The following is a 117-amino-acid chain: Anti-adapter protein IraM (117 aa).

It belongs to the IraM/RssC family.

Its subcellular location is the cytoplasm. In terms of biological role, involved in the stabilization of the sigma stress factor RpoS. The polypeptide is Anti-adapter protein IraM (Klebsiella pneumoniae (strain 342)).